A 533-amino-acid chain; its full sequence is Drimenyl diphosphate synthase (533 aa).

Residues R132, K133, Q163, and W165 each contribute to the (2E,6E)-farnesyl diphosphate site. E169 serves as a coordination point for Mg(2+). PFTB repeat units lie at residues 274-316 (VTPM…RRAA), 324-366 (VAEA…AHDP), 372-415 (VDEA…AAHG), 425-466 (AERA…ARGP), and 474-517 (LDRA…FVLL). D303 functions as the Proton donor in the catalytic mechanism. A (2E,6E)-farnesyl diphosphate-binding site is contributed by R501.

This sequence belongs to the terpene cyclase/mutase family. The cofactor is Mg(2+). It depends on Ni(2+) as a cofactor. Co(2+) serves as cofactor.

It carries out the reaction (2E,6E)-farnesyl diphosphate = (5S,9S,10S)-drim-7-en-11-yl diphosphate. Its function is as follows. Catalyzes the cyclization of farnesyl diphosphate (FPP) to drimenyl diphosphate. Cannot use geranylgeranyl diphosphate (GGPP) as substrate. The polypeptide is Drimenyl diphosphate synthase (Streptomyces showdoensis).